A 72-amino-acid polypeptide reads, in one-letter code: MGSFSIWHWLIVLAVVLLLFGRGKIPELMGDVAKGIKNFKQGMADEDAKEDPRTIDAKAEEPVKDVKKTTKS.

A helical transmembrane segment spans residues methionine 1–glycine 21. Residues methionine 43–serine 72 form a disordered region. Residues glutamate 50 to serine 72 show a composition bias toward basic and acidic residues.

It belongs to the TatA/E family. In terms of assembly, the Tat system comprises two distinct complexes: a TatABC complex, containing multiple copies of TatA, TatB and TatC subunits, and a separate TatA complex, containing only TatA subunits. Substrates initially bind to the TatABC complex, which probably triggers association of the separate TatA complex to form the active translocon.

The protein localises to the cell inner membrane. Its function is as follows. Part of the twin-arginine translocation (Tat) system that transports large folded proteins containing a characteristic twin-arginine motif in their signal peptide across membranes. TatA could form the protein-conducting channel of the Tat system. The polypeptide is Sec-independent protein translocase protein TatA (Brucella suis biovar 1 (strain 1330)).